The sequence spans 460 residues: Cysteine--tRNA ligase (460 aa).

Cys27 contacts Zn(2+). The 'HIGH' region signature appears at 29 to 39 (PTVYDLIHVGN). Residues Cys207, His232, and Glu236 each contribute to the Zn(2+) site. The short motif at 264–268 (KMSKS) is the 'KMSKS' region element. Residue Lys267 coordinates ATP.

Belongs to the class-I aminoacyl-tRNA synthetase family. As to quaternary structure, monomer. Zn(2+) is required as a cofactor.

The protein localises to the cytoplasm. It catalyses the reaction tRNA(Cys) + L-cysteine + ATP = L-cysteinyl-tRNA(Cys) + AMP + diphosphate. In Thermotoga maritima (strain ATCC 43589 / DSM 3109 / JCM 10099 / NBRC 100826 / MSB8), this protein is Cysteine--tRNA ligase (cysS).